A 294-amino-acid chain; its full sequence is 2,4-diacetylphloroglucinol hydrolase (294 aa).

4 residues coordinate Zn(2+): H129, E160, H270, and E274.

This sequence belongs to the DAPG/phloretin hydrolase family. In terms of assembly, homodimer. Requires Zn(2+) as cofactor.

The enzyme catalyses 2,4-diacetylphloroglucinol + H2O = 2-acetylphloroglucinol + acetate. Specifically and significantly activated by CoCl(2). Competitively inhibited by MAPG, but not by 2-hydroxy- and 4-hydroxyacetophenone. In terms of biological role, hydrolase that specifically degrades the potent antimicrobial compound 2,4-diacetylphloroglucinol (DAPG) to equimolar amounts of mildly toxic monoacetylphloroglucinol (MAPG) and acetate. This chain is 2,4-diacetylphloroglucinol hydrolase, found in Pseudomonas sp.